The chain runs to 890 residues: DNA mismatch repair protein MutS (890 aa).

Residue 645 to 652 coordinates ATP; sequence GPNMAGKS.

Belongs to the DNA mismatch repair MutS family.

Its function is as follows. This protein is involved in the repair of mismatches in DNA. It is possible that it carries out the mismatch recognition step. This protein has a weak ATPase activity. The polypeptide is DNA mismatch repair protein MutS (Rickettsia africae (strain ESF-5)).